The chain runs to 1232 residues: Protein transport protein sec-16A.1 (1232 aa).

Disordered stretches follow at residues 18–134, 172–193, 815–843, 866–942, 972–1069, and 1140–1232; these read GASG…SGYA, RNGF…EEDE, PVQE…KWHD, KPIA…VVPE, QPIP…PQKQ, and PHLM…QNND. Residues 26–37 show a composition bias toward polar residues; sequence DWNNPYNASPPS. The span at 67 to 76 shows a compositional bias: low complexity; sequence RPILIQPARP. Residues 78 to 100 are compositionally biased toward polar residues; sequence SQKSNRQGTGMSNGSRGLNSTFN. Polar residues predominate over residues 817–836; that stretch reads QESQQHVPQPQPVENKSISS. A compositionally biased stretch (low complexity) spans 896-914; that stretch reads SSVTVAASASRTSTLTSST. Polar residues-rich tracts occupy residues 1046–1060, 1149–1159, and 1168–1178; these read QQAT…NAKT, SNKSSTNSLRS, and YLQSGMATSQA. The segment covering 1194 to 1203 has biased composition (low complexity); the sequence is PMSFSFMPAP. Residues 1222–1232 are compositionally biased toward polar residues; the sequence is PSESLSKQNND.

This sequence belongs to the SEC16 family. As to quaternary structure, interacts with tfg-1 (via N-terminus); the interaction is direct and is required for both the localization of tfg-1 and to maintain the distribution of sec-16A.1 at endoplasmic reticulum exit sites (ERES).

Its subcellular location is the endoplasmic reticulum. It localises to the endoplasmic reticulum-Golgi intermediate compartment. Its function is as follows. Plays a role in the organization of the endoplasmic reticulum exit sites (ERES), also known as transitional endoplasmic reticulum (tER). In association with tfg-1, accumulates at ERES to positively regulate secretory cargo trafficking from the endoplasmic reticulum to the endoplasmic reticulum-Golgi intermediate compartment (ERGIC) and Golgi apparatus. The chain is Protein transport protein sec-16A.1 from Caenorhabditis elegans.